The sequence spans 438 residues: Anaerobic glycerol-3-phosphate dehydrogenase subunit B (438 aa).

The protein belongs to the anaerobic G-3-P dehydrogenase subunit B family. Composed of a catalytic GlpA/B dimer and of membrane bound GlpC. FMN serves as cofactor.

It catalyses the reaction a quinone + sn-glycerol 3-phosphate = dihydroxyacetone phosphate + a quinol. It functions in the pathway polyol metabolism; glycerol degradation via glycerol kinase pathway; glycerone phosphate from sn-glycerol 3-phosphate (anaerobic route): step 1/1. Functionally, conversion of glycerol 3-phosphate to dihydroxyacetone. Uses fumarate or nitrate as electron acceptor. This Vibrio vulnificus (strain YJ016) protein is Anaerobic glycerol-3-phosphate dehydrogenase subunit B.